Consider the following 165-residue polypeptide: MALNLQDKQAIVAEVSEVAKGALSAVVADSRGVTVDKMTELRKAGREAGVYMRVVRNTLLRRVVEGTQFECLKDTFVGPTLIAYSMEHPGAAARLFKEFAKANAKFEVKAAAFEGELIPASQIDRLATLPTYEEAIARLMATMKEASAGKLVRTLAAVRDAKEAA.

It belongs to the universal ribosomal protein uL10 family. In terms of assembly, part of the ribosomal stalk of the 50S ribosomal subunit. The N-terminus interacts with L11 and the large rRNA to form the base of the stalk. The C-terminus forms an elongated spine to which L12 dimers bind in a sequential fashion forming a multimeric L10(L12)X complex.

In terms of biological role, forms part of the ribosomal stalk, playing a central role in the interaction of the ribosome with GTP-bound translation factors. The polypeptide is Large ribosomal subunit protein uL10 (Salmonella agona (strain SL483)).